The chain runs to 335 residues: Phosphate acyltransferase (335 aa).

Belongs to the PlsX family. In terms of assembly, homodimer. Probably interacts with PlsY.

It localises to the cytoplasm. The enzyme catalyses a fatty acyl-[ACP] + phosphate = an acyl phosphate + holo-[ACP]. The protein operates within lipid metabolism; phospholipid metabolism. Its function is as follows. Catalyzes the reversible formation of acyl-phosphate (acyl-PO(4)) from acyl-[acyl-carrier-protein] (acyl-ACP). This enzyme utilizes acyl-ACP as fatty acyl donor, but not acyl-CoA. This chain is Phosphate acyltransferase, found in Streptococcus pyogenes serotype M1.